The chain runs to 376 residues: C-type lectin domain family 4 member M (376 aa).

Residues 1-49 (MSDSKEPRVQQLGLLEEDPTTSGIRLFPRDFQFQQIHGHKSSTGCLGHG) lie on the Cytoplasmic side of the membrane. Residues 14 to 15 (LL) carry the Endocytosis signal motif. The helical; Signal-anchor for type II membrane protein transmembrane segment at 50-70 (ALVLQLLSFTLLAGVLVAILV) threads the bilayer. The Extracellular portion of the chain corresponds to 71 to 376 (QVSKVPSSLS…KKPTVCFRDE (306 aa)). Asparagine 92 carries N-linked (GlcNAc...) asparagine glycosylation. 6 tandem repeats follow at residues 108–130 (KLQE…PEKS), 131–153 (KLQE…PEKS), 154–176 (KLQE…PEKS), 177–199 (KLQE…PEKS), 200–222 (KLQE…PDQS), and 223–245 (KQQQ…CRHC). The 6 X approximate tandem repeats stretch occupies residues 108-246 (KLQEIYQELT…AFERLCRHCP (139 aa)). Intrachain disulfides connect cysteine 242/cysteine 372, cysteine 245/cysteine 256, cysteine 273/cysteine 366, and cysteine 345/cysteine 358. In terms of domain architecture, C-type lectin spans 251 to 367 (FFQGNCYFMS…CDVDNYWICK (117 aa)). Glutamate 336, asparagine 338, serine 340, glutamate 343, asparagine 354, and aspartate 355 together coordinate Ca(2+). Asparagine 338 carries an N-linked (GlcNAc...) asparagine glycan.

In terms of assembly, homotetramer.

Its subcellular location is the membrane. In terms of biological role, probable pathogen-recognition receptor involved in peripheral immune surveillance in liver. May mediate the endocytosis of pathogens which are subsequently degraded in lysosomal compartments. Probably recognizes in a calcium-dependent manner high mannose N-linked oligosaccharides in a variety of pathogen antigens. Is a receptor for ICAM3, probably by binding to mannose-like carbohydrates. In Gorilla gorilla gorilla (Western lowland gorilla), this protein is C-type lectin domain family 4 member M (CLEC4M).